Here is a 551-residue protein sequence, read N- to C-terminus: MAEPVRLGRKRPLPVCPNPLFVRWLTEWRDEAASRGRHTRFVFQKALRSLQRYPLPLRNGKEAKILQHFGDRLCRMLDERLKEHLASGGDHAPSSPSGKKRASKGPPAQVQGSSMPVPTQPQAGSTNAGYWPAQNSGAREILLQLYREHLNSDGHSFLTKEELLQKCAQKTPRVVPESSRPWPALRGLLHRNLVLRTHRPARYALTPEGLELAQKLAEAEGLSTLNTAFQPEEHHEESPVPEAILSEPGTTEVGVQQRPLELRPSEYRVLLCVDIGETRGAGHRPEMLRELQRLRVPHTVRKLHVGDFVWVAQETRPRDPERPGELVLDHIVERKRLDDLCSSIIDGRFREQKFRLKRCGLGHRIYLVEEHGSVQNLSLPESTLLQAVTNTQVIDGFFVKRTMDIKESAGYLALLTKGLERLYQGHTLHSRPWGTPGDAESEAKPSTNPLCSLLTFSDFNAEAVKNKAQSVREVFARQLMQVRGLSGEKAAALVDRYSTPASLLAAYDACATTKEQEMLLSTVKCGRLQRNLGPALSRTLYQLYCSHSPLT.

Disordered regions lie at residues 85 to 131 (LASG…AGYW) and 231 to 255 (PEEH…EVGV). S95 bears the Phosphoserine mark. Residues 110-131 (VQGSSMPVPTQPQAGSTNAGYW) show a composition bias toward polar residues. The tract at residues 124–243 (GSTNAGYWPA…HHEESPVPEA (120 aa)) is interaction with BLM. Residues 131–230 (WPAQNSGARE…GLSTLNTAFQ (100 aa)) form a winged helix domain (WHD); critical for endonuclease activity region. In terms of domain architecture, ERCC4 spans 270–372 (LLCVDIGETR…HRIYLVEEHG (103 aa)). Residues D274, E277, and D307 contribute to the active site. D274, E277, D307, E333, and R334 together coordinate Mg(2+). The helix-hairpin-helix (2HhH); involved in DNA recognition and bending stretch occupies residues 471-545 (VREVFARQLM…LSRTLYQLYC (75 aa)).

Belongs to the XPF family. In terms of assembly, part of the heterodimeric DNA structure-specific endonuclease complex MUS81-EME1. Part of the heterodimeric DNA structure-specific endonuclease complex MUS81-EME2. Interacts with BLM; may stimulate the endonuclease activity of MUS81. Interacts with SLX4/BTBD12; this interaction is direct and links the MUS81-EME1 complex to SLX4, which may coordinate the action of the structure-specific endonuclease during DNA repair. Interacts with DCLRE1B/Apollo. Interacts with RECQL5; this interaction stimulates mitotic DNA synthesis. Interacts with CHEK2. It depends on Mg(2+) as a cofactor.

Its subcellular location is the nucleus. The protein localises to the nucleolus. Its function is as follows. Catalytic subunit of two functionally distinct, structure-specific, heterodimeric DNA endonucleases MUS81-EME1 and MUS81-EME2 that are involved in the maintenance of genome stability. Both endonucleases have essentially the same substrate specificity though MUS81-EME2 is more active than its MUS81-EME1 counterpart. Both cleave 3'-flaps and nicked Holliday junctions, and exhibit limited endonuclease activity with 5' flaps and nicked double-stranded DNAs. MUS81-EME2 which is active during the replication of DNA is more specifically involved in replication fork processing. Replication forks frequently encounter obstacles to their passage, including DNA base lesions, DNA interstrand cross-links, difficult-to-replicate sequences, transcription bubbles, or tightly bound proteins. One mechanism for the restart of a stalled replication fork involves nucleolytic cleavage mediated by the MUS81-EME2 endonuclease. By acting upon the stalled fork, MUS81-EME2 generates a DNA double-strand break (DSB) that can be repaired by homologous recombination, leading to the restoration of an active fork. MUS81-EME2 could also function in telomere maintenance. MUS81-EME1, on the other hand, is active later in the cell cycle and functions in the resolution of mitotic recombination intermediates including the Holliday junctions, the four-way DNA intermediates that form during homologous recombination. The chain is Structure-specific endonuclease subunit MUS81 from Rattus norvegicus (Rat).